We begin with the raw amino-acid sequence, 544 residues long: MDKKALLALVLSAAVLLIYQIFIYKTTPPPKPVNENKSNTVVVNPAAPVSPQTPADEPSSGSAANPETAAALPVDGTEKEQEITVDTPLYQAVFTTKGGALKSFALKNYRETLAVNSKPIELVDVKEAMPYPLGISFPASSVDVSPASFFKADVPAIDLKSTSESRRLTFVQTWPGKIKIEKIYTFNPGKYAIDLEIRTYNLSEVPLSQEIALFWNQYVDPSAKEDSYGHTGPVSYVAKDVEREKVTKMETPKSLGPDVSWGGFESKYFIAAMIPQNPSLTSLSLSKDSSNMVSTSLKGPKNIIPPGQAGFFTYKLFLGPKDYNILKAQGVGLENAIDFGSWLKWLAMPLLLSLKFLYNYVHNYGIAIIILTILIKILFWPLGNKSYKSMKEMQKLQPKMLELREKYKNDKARLSQETMALYKAYKVNPMGGCLPMIIQIPVFFGLYKALLYAIELRHSPFFLWIQDLSAKDPYYITPIIMGATMFLQQKMTPVSGDPTQAKIMLWMPVIFTFMFLNFPSGLVIYWLFNNILSIGQQYYINKQA.

Residues 4–24 (KALLALVLSAAVLLIYQIFIY) form a helical membrane-spanning segment. The tract at residues 44–78 (NPAAPVSPQTPADEPSSGSAANPETAAALPVDGTE) is disordered. 3 consecutive transmembrane segments (helical) span residues 363–383 (NYGI…WPLG), 434–454 (LPMI…LYAI), and 508–528 (PVIF…YWLF).

Belongs to the OXA1/ALB3/YidC family. Type 1 subfamily. Interacts with the Sec translocase complex via SecD. Specifically interacts with transmembrane segments of nascent integral membrane proteins during membrane integration.

The protein resides in the cell inner membrane. Functionally, required for the insertion and/or proper folding and/or complex formation of integral membrane proteins into the membrane. Involved in integration of membrane proteins that insert both dependently and independently of the Sec translocase complex, as well as at least some lipoproteins. Aids folding of multispanning membrane proteins. This is Membrane protein insertase YidC from Syntrophus aciditrophicus (strain SB).